Here is a 97-residue protein sequence, read N- to C-terminus: MLATRVFNLIGRRAISTSVCVRAHGSXVKSEDYALPVYVDRRDYPLPDVAHVKNLSASQKAXKEKEKASWSSLSMDEKVELYRLKFNESFAEMNRST.

Residues 1–22 (MLATRVFNLIGRRAISTSVCVR) constitute a mitochondrion transit peptide. Lys-29 carries the post-translational modification N6-acetyllysine; alternate. N6-succinyllysine; alternate is present on Lys-29. Lys-53 bears the N6-acetyllysine mark. A phosphoserine mark is found at Ser-56 and Ser-58. An N6-acetyllysine; alternate modification is found at Lys-60. Lys-60 is modified (N6-succinyllysine; alternate). Residue Lys-67 is modified to N6-acetyllysine.

This sequence belongs to the cytochrome c oxidase IV family. As to quaternary structure, component of the cytochrome c oxidase (complex IV, CIV), a multisubunit enzyme composed of 14 subunits. The complex is composed of a catalytic core of 3 subunits MT-CO1, MT-CO2 and MT-CO3, encoded in the mitochondrial DNA, and 11 supernumerary subunits COX4I, COX5A, COX5B, COX6A, COX6B, COX6C, COX7A, COX7B, COX7C, COX8 and NDUFA4, which are encoded in the nuclear genome. The complex exists as a monomer or a dimer and forms supercomplexes (SCs) in the inner mitochondrial membrane with NADH-ubiquinone oxidoreductase (complex I, CI) and ubiquinol-cytochrome c oxidoreductase (cytochrome b-c1 complex, complex III, CIII), resulting in different assemblies (supercomplex SCI(1)III(2)IV(1) and megacomplex MCI(2)III(2)IV(2)). Interacts with PHB2; the interaction decreases in absence of SPHK2. Interacts with AFG1L. Interacts with ABCB7; this interaction allows the regulation of cellular iron homeostasis and cellular reactive oxygen species (ROS) levels in cardiomyocytes. Interacts with FLVCR2; this interaction occurs in the absence of heme and is disrupted upon heme binding. Interacts with IRGC.

It localises to the mitochondrion inner membrane. The protein operates within energy metabolism; oxidative phosphorylation. In terms of biological role, component of the cytochrome c oxidase, the last enzyme in the mitochondrial electron transport chain which drives oxidative phosphorylation. The respiratory chain contains 3 multisubunit complexes succinate dehydrogenase (complex II, CII), ubiquinol-cytochrome c oxidoreductase (cytochrome b-c1 complex, complex III, CIII) and cytochrome c oxidase (complex IV, CIV), that cooperate to transfer electrons derived from NADH and succinate to molecular oxygen, creating an electrochemical gradient over the inner membrane that drives transmembrane transport and the ATP synthase. Cytochrome c oxidase is the component of the respiratory chain that catalyzes the reduction of oxygen to water. Electrons originating from reduced cytochrome c in the intermembrane space (IMS) are transferred via the dinuclear copper A center (CU(A)) of subunit 2 and heme A of subunit 1 to the active site in subunit 1, a binuclear center (BNC) formed by heme A3 and copper B (CU(B)). The BNC reduces molecular oxygen to 2 water molecules using 4 electrons from cytochrome c in the IMS and 4 protons from the mitochondrial matrix. The chain is Cytochrome c oxidase subunit 4 isoform 1, mitochondrial (COX4I1) from Sus scrofa (Pig).